The chain runs to 129 residues: MKTHRPARVGELIKREVSDMLLRGQIKDPRVGAGLVSVTDVEVTGDLRQAKIFVSIFGTPEAQKLTMMALAEVTGFVRQEIGHRIRLRYTPEIAFVQDRSLERGARITRLIDEIRAEEEARAAHKEEGN.

The protein belongs to the RbfA family. As to quaternary structure, monomer. Binds 30S ribosomal subunits, but not 50S ribosomal subunits or 70S ribosomes.

The protein localises to the cytoplasm. Its function is as follows. One of several proteins that assist in the late maturation steps of the functional core of the 30S ribosomal subunit. Associates with free 30S ribosomal subunits (but not with 30S subunits that are part of 70S ribosomes or polysomes). Required for efficient processing of 16S rRNA. May interact with the 5'-terminal helix region of 16S rRNA. This Gloeobacter violaceus (strain ATCC 29082 / PCC 7421) protein is Ribosome-binding factor A.